A 215-amino-acid polypeptide reads, in one-letter code: Adenylate kinase (215 aa).

An ATP-binding site is contributed by Gly-10 to Thr-15. The tract at residues Ser-30–Val-59 is NMP. AMP contacts are provided by residues Thr-31, Arg-36, Gly-57–Val-59, Gly-85–Arg-88, and Gln-92. The tract at residues Gly-122–Asp-159 is LID. ATP contacts are provided by residues Arg-123 and Val-132–Tyr-133. 2 residues coordinate AMP: Arg-156 and Arg-167. Gly-201 is a binding site for ATP.

Belongs to the adenylate kinase family. In terms of assembly, monomer.

The protein resides in the cytoplasm. It carries out the reaction AMP + ATP = 2 ADP. Its pathway is purine metabolism; AMP biosynthesis via salvage pathway; AMP from ADP: step 1/1. Functionally, catalyzes the reversible transfer of the terminal phosphate group between ATP and AMP. Plays an important role in cellular energy homeostasis and in adenine nucleotide metabolism. This is Adenylate kinase from Azotobacter vinelandii (strain DJ / ATCC BAA-1303).